The sequence spans 473 residues: MALKDTGSGGSTILPISEMVSSSSSPGASAAAAPGPCAPSPFPEVVELNVGGQVYVTKHSTLLSVPDSTLASMFSPSSPRGGARRRGELPRDSRARFFIDRDGFLFRYVLDYLRDKQLALPEHFPEKERLLREAEYFQLTDLVKLLSPKVTKQNSLNDEGCQSDLEDNVSQGSSDALLLRGAAAAVPSGPGAHGGGGGGGAQDKRSGFLTLGYRGSYTTVRDNQADAKFRRVARIMVCGRIALAKEVFGDTLNESRDPDRQPEKYTSRFYLKFTYLEQAFDRLSEAGFHMVACNSSGTAAFVNQYRDDKIWSSYTEYIFFRPPQKIVSPKQEHEDRKHDKVTDKGSESGTSCNELSTSSCDSHSEASTPQDNPSSAQQATAHQPNTLTLDRPSKKAPVQWIPPPDKRRNSELFQTLISKSRETNLSKKKVCEKLSVEEEMKKCIQDFKKIHIPDYFPERKRQWQSELLQKYGL.

The segment at 1–36 is disordered; the sequence is MALKDTGSGGSTILPISEMVSSSSSPGASAAAAPGP. The span at 21–35 shows a compositional bias: low complexity; sequence SSSSSPGASAAAAPG. The region spanning 44 to 122 is the BTB domain; it reads EVVELNVGGQ…LRDKQLALPE (79 aa). The residue at position 78 (Ser-78) is a Phosphoserine. An Omega-N-methylarginine modification is found at Arg-80. Residues 326-409 form a disordered region; sequence IVSPKQEHED…WIPPPDKRRN (84 aa). Residues 330 to 346 are compositionally biased toward basic and acidic residues; it reads KQEHEDRKHDKVTDKGS. Positions 347 to 388 are enriched in polar residues; it reads ESGTSCNELSTSSCDSHSEASTPQDNPSSAQQATAHQPNTLT. The residue at position 410 (Ser-410) is a Phosphoserine.

As to quaternary structure, interacts as a tetramer with GABRB1 and GABRB2.

The protein resides in the presynaptic cell membrane. It localises to the postsynaptic cell membrane. Auxiliary subunit of GABA-B receptors that determine the pharmacology and kinetics of the receptor response. Increases agonist potency and markedly alter the G-protein signaling of the receptors by accelerating onset and promoting desensitization. This is BTB/POZ domain-containing protein KCTD8 (KCTD8) from Homo sapiens (Human).